Consider the following 421-residue polypeptide: Exopolysaccharide production protein ExoF (421 aa).

The first 31 residues, 1–31 (MQSNRRSGKSAGSRMVSCFTRLALLAALAAS), serve as a signal peptide directing secretion.

Its subcellular location is the periplasm. It functions in the pathway glycan metabolism; exopolysaccharide biosynthesis. Functionally, involved in succinoglycan (EPS I) synthesis. Needed for the addition of the first sugar (galactose) to the isoprenoid carrier. This is Exopolysaccharide production protein ExoF (exoF) from Rhizobium meliloti (strain 1021) (Ensifer meliloti).